A 730-amino-acid chain; its full sequence is Catalase-peroxidase (730 aa).

Residues 1 to 25 (MEEKKCPVTGHTQHTPTGGGTKNKD) form a disordered region. Residues 95 to 218 (WHSAGTYRLN…LAAVQMGLIY (124 aa)) constitute a cross-link (tryptophyl-tyrosyl-methioninium (Trp-Tyr) (with M-244)). Histidine 96 (proton acceptor) is an active-site residue. A cross-link (tryptophyl-tyrosyl-methioninium (Tyr-Met) (with W-95)) is located at residues 218-244 (YVNPEGPNGQPSVLASGRDVRDTFKRM). Histidine 259 is a binding site for heme b.

This sequence belongs to the peroxidase family. Peroxidase/catalase subfamily. Homodimer or homotetramer. It depends on heme b as a cofactor. In terms of processing, formation of the three residue Trp-Tyr-Met cross-link is important for the catalase, but not the peroxidase activity of the enzyme.

It catalyses the reaction H2O2 + AH2 = A + 2 H2O. It carries out the reaction 2 H2O2 = O2 + 2 H2O. Functionally, bifunctional enzyme with both catalase and broad-spectrum peroxidase activity. This chain is Catalase-peroxidase, found in Desulfitobacterium hafniense (strain Y51).